The following is a 198-amino-acid chain: DnaJ homolog subfamily C member 5 (198 aa).

Phosphoserine occurs at positions 8, 10, 12, and 15. The 70-residue stretch at 13-82 (GESLYHVLGL…RNIYDKYGSL (70 aa)) folds into the J domain. Position 17 is a phosphotyrosine (tyrosine 17). Position 56 is an N6-acetyllysine (lysine 56). The residue at position 151 (serine 151) is a Phosphoserine.

Oligomers. Homodimer. Interacts with the chaperone complex consisting of HSC70 and SGTA. Interacts with ZDHHC13 (via ANK repeats). Interacts with ZDHHC17 (via ANK repeats). Interacts with SYT1, SYT5 and SYT7, and with SYT9, forming a complex with SNAP25. Ser-10 phosphorylation induces an order-to-disorder transition triggering the interaction with Lys-58. This conformational switch modulates DNAJC5's cellular functions by reducing binding to syntaxin and synaptogamin without altering HSC70 interactions. Post-translationally, palmitoylated. Could be palmitoylated by DHHC3, DHHC7, DHHC15 and DHHC17. Palmitoylation occurs probably in the cysteine-rich domain and regulates DNAJC5 membrane attachment. In terms of tissue distribution, expressed in pancreas, kidney, skeletal muscle, liver, lung, placenta, brain and heart.

It localises to the cytoplasm. The protein localises to the cytosol. It is found in the membrane. The protein resides in the cytoplasmic vesicle. Its subcellular location is the secretory vesicle. It localises to the chromaffin granule membrane. The protein localises to the melanosome. It is found in the cell membrane. Functionally, acts as a general chaperone in regulated exocytosis. Acts as a co-chaperone for the SNARE protein SNAP-25. Involved in the calcium-mediated control of a late stage of exocytosis. May have an important role in presynaptic function. May be involved in calcium-dependent neurotransmitter release at nerve endings. This is DnaJ homolog subfamily C member 5 from Homo sapiens (Human).